The following is a 158-amino-acid chain: Endoribonuclease YbeY (158 aa).

Positions 119, 123, and 129 each coordinate Zn(2+).

The protein belongs to the endoribonuclease YbeY family. Zn(2+) serves as cofactor.

The protein localises to the cytoplasm. Its function is as follows. Single strand-specific metallo-endoribonuclease involved in late-stage 70S ribosome quality control and in maturation of the 3' terminus of the 16S rRNA. In Chlamydia pneumoniae (Chlamydophila pneumoniae), this protein is Endoribonuclease YbeY.